The sequence spans 46 residues: Delta-actitoxin-Avd1d (46 aa).

3 cysteine pairs are disulfide-bonded: Cys4/Cys44, Cys6/Cys34, and Cys27/Cys45.

This sequence belongs to the sea anemone sodium channel inhibitory toxin family. Type I subfamily.

The protein resides in the secreted. It is found in the nematocyst. Binds specifically to voltage-gated sodium channels (Nav), thereby delaying their inactivation during signal transduction. Thus it strongly stimulates mammalian cardiac muscle contraction. The polypeptide is Delta-actitoxin-Avd1d (Anemonia sulcata (Mediterranean snakelocks sea anemone)).